We begin with the raw amino-acid sequence, 501 residues long: Cytochrome P450 2J5 (501 aa).

Cys447 is a heme binding site.

It belongs to the cytochrome P450 family. Requires heme as cofactor.

The protein resides in the endoplasmic reticulum membrane. It localises to the microsome membrane. It carries out the reaction an organic molecule + reduced [NADPH--hemoprotein reductase] + O2 = an alcohol + oxidized [NADPH--hemoprotein reductase] + H2O + H(+). This is Cytochrome P450 2J5 (Cyp2j5) from Mus musculus (Mouse).